The chain runs to 216 residues: Adenylate kinase (216 aa).

An ATP-binding site is contributed by 10–15; sequence GAGKGT. The NMP stretch occupies residues 30-59; sequence STGDMFRAAMKAETEMGLQAKSFIDKGALV. AMP-binding positions include threonine 31, arginine 36, 57–59, 85–88, and glutamine 92; these read ALV and GFPR. The segment at 126 to 163 is LID; it reads GRRICKECGATYHLEFNPPAKADVCDKCGGELYQRSDD. Arginine 127 contributes to the ATP binding site. Zn(2+)-binding residues include cysteine 130 and cysteine 133. Residue 136–137 participates in ATP binding; sequence TY. 2 residues coordinate Zn(2+): cysteine 150 and cysteine 153. The AMP site is built by arginine 160 and arginine 171. Residue glutamine 199 participates in ATP binding.

The protein belongs to the adenylate kinase family. Monomer.

The protein resides in the cytoplasm. It carries out the reaction AMP + ATP = 2 ADP. Its pathway is purine metabolism; AMP biosynthesis via salvage pathway; AMP from ADP: step 1/1. Catalyzes the reversible transfer of the terminal phosphate group between ATP and AMP. Plays an important role in cellular energy homeostasis and in adenine nucleotide metabolism. The sequence is that of Adenylate kinase from Bacillus cereus (strain B4264).